A 61-amino-acid chain; its full sequence is Large ribosomal subunit protein uL30 (61 aa).

Belongs to the universal ribosomal protein uL30 family. As to quaternary structure, part of the 50S ribosomal subunit.

This chain is Large ribosomal subunit protein uL30, found in Mycolicibacterium gilvum (strain PYR-GCK) (Mycobacterium gilvum (strain PYR-GCK)).